Consider the following 378-residue polypeptide: MPHSSLHPSIPRPRGHRAKKAAFVLLSTCLAALWELGEPADHILRWLVLHLASEQLGLLFKGLCSLAEEIRHVHSRYQGSYWRAFRACLGCPIRCGVLLLLSCYCYTFLPNTAGLPFAWIVALLGLSQALNILLDLQGLAPAVVSTVCEQGNFNVAHGLAWSYYIGYLRLILPGLQARIHTYNQRHNNTVRGTGVHKLYILLPLDCGVPDDLSVADPNIRFLHELPKQSADRAGIKGRVYTNSIYEILENGKPVGTCVLEYATPLQTLFAMSQDSRAGFSREERLEQAKLFCQTLGDILADVPESQYCRLIVYLDAAEGSSFSLSQEILKHLKQEEKEEVTVGTMGSSGVLESSTLDKEPQLLISGMDQPLPLRTDVF.

A run of 2 helical transmembrane segments spans residues A21 to D41 and W46 to L66. 2 S-palmitoyl cysteine lipidation sites follow: C88 and C91. 2 helical membrane passes run L89–L109 and G114–L134. The cyclic dinucleotide-binding domain (CBD) stretch occupies residues F153 to E339. S162, Y167, R238, and T263 together coordinate 2',3'-cGAMP. 3',3'-c-di-GMP-binding positions include S162, Y167, R238–T241, and T263. The 2',3'-cUAMP site is built by Y167, R238, and T263. The interval E339–F378 is C-terminal tail (CTT). S354 carries the post-translational modification Phosphoserine. T355 carries the post-translational modification Phosphothreonine. The pLxIS motif motif lies at L362 to S365. S365 is modified (phosphoserine; by TBK1).

This sequence belongs to the STING family. In terms of assembly, homodimer; forms a homodimer in absence of cyclic nucleotide (c-di-GMP or cGAMP). Homotetramer; in presence of cyclic nucleotide (c-di-GMP or cGAMP), forms tetramers and higher-order oligomers through side-by-side packing. Interacts (when phosphorylated) with IRF3; following activation and phosphorylation on the pLxIS motif by TBK1, recruits IRF3. Interacts with TBK1; when homodimer, leading to subsequent production of IFN-beta. In terms of processing, phosphorylation by TBK1 leads to activation and production of IFN-beta. Following cyclic nucleotide (c-di-GMP or cGAMP)-binding, activation and translocation from the endoplasmic reticulum, STING1 is phosphorylated by TBK1 at Ser-365 in the pLxIS motif. The phosphorylated pLxIS motif constitutes an IRF3-binding motif, leading to recruitment of the transcription factor IRF3 to induce type-I interferons and other cytokines. In contrast, lacks phosphorylation site at position 357, leading to reduced production of type-I interferons and other cytokines.

It localises to the endoplasmic reticulum membrane. Its subcellular location is the cytoplasm. The protein resides in the perinuclear region. It is found in the endoplasmic reticulum-Golgi intermediate compartment membrane. The protein localises to the golgi apparatus membrane. It localises to the cytoplasmic vesicle. Its subcellular location is the autophagosome membrane. The protein resides in the mitochondrion outer membrane. It is found in the cell membrane. It catalyses the reaction H(+)(in) = H(+)(out). In terms of biological role, facilitator of innate immune signaling that acts as a sensor of cytosolic DNA from bacteria and viruses and promotes low production of type I interferon (IFN-alpha and IFN-beta). Compared to other mammals, STING1-dependent type I interferon induction is strongly reduced in bats, suggesting that the cGAS-STING pathway promotes a limited inflammatory response. Innate immune response is triggered in response to non-CpG double-stranded DNA from viruses and bacteria delivered to the cytoplasm. Acts by binding cyclic dinucleotides: recognizes and binds cyclic di-GMP (c-di-GMP), a second messenger produced by bacteria, cyclic UMP-AMP (2',3'-cUAMP), and cyclic GMP-AMP (cGAMP), a messenger produced by CGAS in response to DNA virus in the cytosol. Upon binding to c-di-GMP, cUAMP or cGAMP, STING1 oligomerizes, translocates from the endoplasmic reticulum and is phosphorylated by TBK1 on the pLxIS motif, leading to recruitment and subsequent activation of the transcription factor IRF3 to induce expression of type I interferon and exert a potent anti-viral state. In addition to promote the production of type I interferons, plays a direct role in autophagy. Following cGAMP-binding, STING1 buds from the endoplasmic reticulum into COPII vesicles, which then form the endoplasmic reticulum-Golgi intermediate compartment (ERGIC). The ERGIC serves as the membrane source for WIPI2 recruitment and LC3 lipidation, leading to formation of autophagosomes that target cytosolic DNA or DNA viruses for degradation by the lysosome. Promotes autophagy by acting as a proton channel that directs proton efflux from the Golgi to facilitate MAP1LC3B/LC3B lipidation. The autophagy- and interferon-inducing activities can be uncoupled and autophagy induction is independent of TBK1 phosphorylation. The chain is Stimulator of interferon genes protein from Rhinolophus ferrumequinum (Greater horseshoe bat).